The following is a 208-amino-acid chain: Uracil phosphoribosyltransferase (208 aa).

5-phospho-alpha-D-ribose 1-diphosphate is bound by residues arginine 78, arginine 103, and 130 to 138 (DPMLATGGS). Uracil-binding positions include isoleucine 193 and 198–200 (GDA). Aspartate 199 lines the 5-phospho-alpha-D-ribose 1-diphosphate pocket.

It belongs to the UPRTase family. Requires Mg(2+) as cofactor.

It carries out the reaction UMP + diphosphate = 5-phospho-alpha-D-ribose 1-diphosphate + uracil. It functions in the pathway pyrimidine metabolism; UMP biosynthesis via salvage pathway; UMP from uracil: step 1/1. With respect to regulation, allosterically activated by GTP. Functionally, catalyzes the conversion of uracil and 5-phospho-alpha-D-ribose 1-diphosphate (PRPP) to UMP and diphosphate. The polypeptide is Uracil phosphoribosyltransferase (Shewanella amazonensis (strain ATCC BAA-1098 / SB2B)).